Reading from the N-terminus, the 111-residue chain is NADH-ubiquinone oxidoreductase chain 3 (111 aa).

3 helical membrane-spanning segments follow: residues 2–22 (ILIWLSIFMLVFIMLTLGMFV), 54–74 (FFVITLIFLIFDVEIYLLLPM), and 82–102 (PTTYLIIFFTFILVAGVFYEW).

The protein belongs to the complex I subunit 3 family.

It is found in the mitochondrion membrane. It catalyses the reaction a ubiquinone + NADH + 5 H(+)(in) = a ubiquinol + NAD(+) + 4 H(+)(out). Its function is as follows. Core subunit of the mitochondrial membrane respiratory chain NADH dehydrogenase (Complex I) that is believed to belong to the minimal assembly required for catalysis. Complex I functions in the transfer of electrons from NADH to the respiratory chain. The immediate electron acceptor for the enzyme is believed to be ubiquinone. The protein is NADH-ubiquinone oxidoreductase chain 3 (ND3) of Artemia franciscana (Brine shrimp).